Reading from the N-terminus, the 685-residue chain is Methionine--tRNA ligase (685 aa).

Zn(2+) is bound by residues Cys142, Cys145, Cys155, and Cys158. The 'KMSKS' region signature appears at 330-334; the sequence is KMSKS. Lys333 provides a ligand contact to ATP. In terms of domain architecture, tRNA-binding spans 584–685; the sequence is DFIKVDLRVA…SGAKPGDKVS (102 aa).

It belongs to the class-I aminoacyl-tRNA synthetase family. MetG type 1 subfamily. As to quaternary structure, homodimer. Zn(2+) serves as cofactor.

The protein localises to the cytoplasm. It catalyses the reaction tRNA(Met) + L-methionine + ATP = L-methionyl-tRNA(Met) + AMP + diphosphate. In terms of biological role, is required not only for elongation of protein synthesis but also for the initiation of all mRNA translation through initiator tRNA(fMet) aminoacylation. This Acinetobacter baylyi (strain ATCC 33305 / BD413 / ADP1) protein is Methionine--tRNA ligase.